We begin with the raw amino-acid sequence, 731 residues long: Alpha-xylosidase (731 aa).

Catalysis depends on residues aspartate 353 and glutamate 356. Aspartate 428 functions as the Proton donor in the catalytic mechanism.

This sequence belongs to the glycosyl hydrolase 31 family. As to quaternary structure, monomer.

The catalysed reaction is Hydrolysis of terminal, non-reducing alpha-D-xylose residues with release of alpha-D-xylose.. Catalyzes the liberation of alpha-xylose from the non-reducing terminal glucose of xyloglucan oligosaccharides. Has high hydrolytic activity on the disaccharide isoprimeverose. Follows a retaining mechanism of substrate hydrolysis. This Saccharolobus solfataricus (strain ATCC 35092 / DSM 1617 / JCM 11322 / P2) (Sulfolobus solfataricus) protein is Alpha-xylosidase (xylS).